Reading from the N-terminus, the 310-residue chain is GMP synthase [glutamine-hydrolyzing] subunit B (310 aa).

Residues 2–185 form the GMPS ATP-PPase domain; it reads FDPKKFIDEA…LGLPDSIVYR (184 aa). 29–35 is an ATP binding site; the sequence is SGGVDSS.

As to quaternary structure, heterodimer composed of a glutamine amidotransferase subunit (A) and a GMP-binding subunit (B).

It carries out the reaction XMP + L-glutamine + ATP + H2O = GMP + L-glutamate + AMP + diphosphate + 2 H(+). The protein operates within purine metabolism; GMP biosynthesis; GMP from XMP (L-Gln route): step 1/1. In terms of biological role, catalyzes the synthesis of GMP from XMP. This chain is GMP synthase [glutamine-hydrolyzing] subunit B (guaAB), found in Methanocaldococcus jannaschii (strain ATCC 43067 / DSM 2661 / JAL-1 / JCM 10045 / NBRC 100440) (Methanococcus jannaschii).